Reading from the N-terminus, the 116-residue chain is Antimicrobial peptide 1b (116 aa).

The first 34 residues, 1–34, serve as a signal peptide directing secretion; that stretch reads MKPHMSATVLRAPRVAAILLAVVLAAVLATAVNG. Residues 35–77 form the Chitin-binding type-1 domain; that stretch reads AQRCGDQARGAKCPNCLCCGKYGFCGSGDAYCGAGSCQSQCRG. 5 cysteine pairs are disulfide-bonded: Cys-38–Cys-53, Cys-47–Cys-59, Cys-50–Cys-78, Cys-52–Cys-66, and Cys-71–Cys-75. Positions 80-116 are excised as a propeptide; that stretch reads DDVVGQALPAEPGSTRATAASSASARGLNLTATTGGP. The segment at 89–116 is disordered; that stretch reads AEPGSTRATAASSASARGLNLTATTGGP. The span at 93 to 105 shows a compositional bias: low complexity; the sequence is STRATAASSASAR.

Functionally, binds chitin. Has antifungal activity against the fungi F.solani (IC(50)=5 ug/ml), F.verticillioides (IC(50)=30 ug/ml), F.oxysporum (IC(50)=5 ug/ml), B.sorokiniana (IC(50)=5 ug/ml), B.cinerea (IC(50)=20 ug/ml) and N.crassa (IC(50)=10 ug/ml). Inhibits hyphal elongation and causes browning of hyphae in F.oxysporum. Causes destruction and discoloration of spores in B.sorokiniana. Inhibits the development of disease caused by the fungus P.infestans on potato tubers. Has antibacterial activity against the Gram-negative bacteria P.syringae and E.carotovora, and the Gram-positive bacterium C.michiganensis. In terms of biological role, has antifungal activity against F.verticillioides (IC(50)=2.7 ug/ml). At concentrations between 45 uM and 225 uM, inhibits activity of metalloproteinase fungalysin Fv-cpm from F.verticillioides. The protein is Antimicrobial peptide 1b of Triticum kiharae (Wheat).